A 65-amino-acid polypeptide reads, in one-letter code: Large ribosomal subunit protein bL35 (65 aa).

The protein belongs to the bacterial ribosomal protein bL35 family.

This chain is Large ribosomal subunit protein bL35, found in Yersinia pseudotuberculosis serotype O:1b (strain IP 31758).